The sequence spans 373 residues: NAD(P)H-quinone oxidoreductase subunit 1 (373 aa).

The next 9 membrane-spanning stretches (helical) occupy residues 29–49, 64–84, 98–118, 129–149, 177–197, 202–222, 267–287, 309–329, and 348–368; these read LWVPLPMLLMVIAATLGVMVM, IGPNMAGPQGVLIPIADGIKL, VLFTLGPILVFLPVFLCYLVV, IAIGVFFLIATSSVQPIGLLM, LALSVLAVVLMSNGLDTVGIV, GLGILSWNVWRQPIGFVIFLI, LLASLIAAVLYLGGWSFVVPV, VLGILMTMVKAFIFVFLAILL, and FLLPVSFVNLLLTAALKLAFP.

The protein belongs to the complex I subunit 1 family. In terms of assembly, NDH-1 is composed of at least 11 different subunits.

It is found in the cellular thylakoid membrane. It carries out the reaction a plastoquinone + NADH + (n+1) H(+)(in) = a plastoquinol + NAD(+) + n H(+)(out). The enzyme catalyses a plastoquinone + NADPH + (n+1) H(+)(in) = a plastoquinol + NADP(+) + n H(+)(out). Functionally, NDH-1 shuttles electrons from an unknown electron donor, via FMN and iron-sulfur (Fe-S) centers, to quinones in the respiratory and/or the photosynthetic chain. The immediate electron acceptor for the enzyme in this species is believed to be plastoquinone. Couples the redox reaction to proton translocation, and thus conserves the redox energy in a proton gradient. The protein is NAD(P)H-quinone oxidoreductase subunit 1 of Synechococcus sp. (strain JA-3-3Ab) (Cyanobacteria bacterium Yellowstone A-Prime).